A 50-amino-acid polypeptide reads, in one-letter code: Large ribosomal subunit protein bL33B (50 aa).

It belongs to the bacterial ribosomal protein bL33 family.

The polypeptide is Large ribosomal subunit protein bL33B (Mycoplasmopsis agalactiae (strain NCTC 10123 / CIP 59.7 / PG2) (Mycoplasma agalactiae)).